A 426-amino-acid polypeptide reads, in one-letter code: Dihydroorotase (426 aa).

Positions 62 and 64 each coordinate Zn(2+). Residues 64-66 (HLR) and N96 each bind substrate. Zn(2+) contacts are provided by D154, H181, H234, and D307. The active site involves D307. Residue H311 participates in substrate binding.

It belongs to the metallo-dependent hydrolases superfamily. DHOase family. Class I DHOase subfamily. Zn(2+) is required as a cofactor.

It catalyses the reaction (S)-dihydroorotate + H2O = N-carbamoyl-L-aspartate + H(+). It functions in the pathway pyrimidine metabolism; UMP biosynthesis via de novo pathway; (S)-dihydroorotate from bicarbonate: step 3/3. In terms of biological role, catalyzes the reversible cyclization of carbamoyl aspartate to dihydroorotate. This Syntrophus aciditrophicus (strain SB) protein is Dihydroorotase.